The chain runs to 92 residues: Small ribosomal subunit protein uS19 (92 aa).

This sequence belongs to the universal ribosomal protein uS19 family.

In terms of biological role, protein S19 forms a complex with S13 that binds strongly to the 16S ribosomal RNA. This chain is Small ribosomal subunit protein uS19, found in Vibrio campbellii (strain ATCC BAA-1116).